A 171-amino-acid polypeptide reads, in one-letter code: MTKQHAFTREDLLRCSRGELFGPGNAQLPAPNMLMVDRITHISEEGGKYGKGELVAELDITPDLWFFACHFEGDPVMPGCLGLDAMWQLVGFFLGWQGLPGRGRALGSGEVKFFGQVLPTAKKVTYNIHIKRVLKGKLNMAIADGSVSVDGREIYTAEALRVGVFTSTDNF.

H70 is an active-site residue.

It belongs to the thioester dehydratase family. FabA subfamily. In terms of assembly, homodimer.

The protein localises to the cytoplasm. The enzyme catalyses a (3R)-hydroxyacyl-[ACP] = a (2E)-enoyl-[ACP] + H2O. It carries out the reaction (3R)-hydroxydecanoyl-[ACP] = (2E)-decenoyl-[ACP] + H2O. It catalyses the reaction (2E)-decenoyl-[ACP] = (3Z)-decenoyl-[ACP]. It participates in lipid metabolism; fatty acid biosynthesis. In terms of biological role, necessary for the introduction of cis unsaturation into fatty acids. Catalyzes the dehydration of (3R)-3-hydroxydecanoyl-ACP to E-(2)-decenoyl-ACP and then its isomerization to Z-(3)-decenoyl-ACP. Can catalyze the dehydratase reaction for beta-hydroxyacyl-ACPs with saturated chain lengths up to 16:0, being most active on intermediate chain length. This Pseudomonas putida (strain W619) protein is 3-hydroxydecanoyl-[acyl-carrier-protein] dehydratase.